Reading from the N-terminus, the 251-residue chain is MNLNSIPAFDDNYIWVLNDEAGRCLIVDPGDAEPVLNAIAANNWQPEAIFLTHHHHDHVGGVKELVEKFPQIVVYGPQETQDKGTTQVVKDGETAFVLGHEFSVIATPGHTLGHICYFSKPYLFCGDTLFSGGCGRLFEGTASQMYQSLKKLSALPDDTLVCCAHEYTLSNMEFALSILPHDLSINDYYRKVKELRAKNQITQPVILKNERQINVFLRTEHIDLINVINEETLLQQPDERFAWLRSKKDRF.

The Zn(2+) site is built by histidine 53, histidine 55, aspartate 57, histidine 58, histidine 110, aspartate 127, and histidine 165.

This sequence belongs to the metallo-beta-lactamase superfamily. Glyoxalase II family. As to quaternary structure, monomer. Zn(2+) is required as a cofactor.

The catalysed reaction is an S-(2-hydroxyacyl)glutathione + H2O = a 2-hydroxy carboxylate + glutathione + H(+). The protein operates within secondary metabolite metabolism; methylglyoxal degradation; (R)-lactate from methylglyoxal: step 2/2. In terms of biological role, thiolesterase that catalyzes the hydrolysis of S-D-lactoyl-glutathione to form glutathione and D-lactic acid. This chain is Hydroxyacylglutathione hydrolase, found in Shigella dysenteriae serotype 1 (strain Sd197).